We begin with the raw amino-acid sequence, 1009 residues long: Protein WBSCR14 homolog (1009 aa).

Disordered regions lie at residues 1–20 (MSRG…PHDD), 304–354 (MSLG…LHQM), 488–531 (NNQP…DPMM), and 686–728 (ILES…EQEA). Composition is skewed to polar residues over residues 324–350 (RTPT…SSAS) and 499–508 (RSNLLPTQND). Residues 511–526 (LPQFLQSTQPTPQPQS) are compositionally biased toward low complexity. Positions 686 to 695 (ILESPSTSGD) are enriched in polar residues. Residues 803-856 (RKRILHLHAEQNRRSALKDGFDQLMDIIPDLYSGGVKPTNAVVLAKSADHIRRL) enclose the bHLH domain. The tract at residues 856-877 (LQAEKWDKTQKIDEAKAKIEKL) is leucine-zipper.

Expressed in intestine, neurons, muscle, hypodermis, excretory cell and other tissues.

It localises to the nucleus. Its subcellular location is the cytoplasm. It is found in the mitochondrion. Functionally, transcription factor that binds to the E box motif 5'-CACGTG-3', probably in a heterodimeric complex with mxl-2. Involved in modulating longevity in response to TOR signaling, dietary restriction, the decline in protein homeostasis associated with normal aging, germline signaling and the insulin-like signaling pathway. Plays a role in autophagy. Involved in regulating migration of the ray 1 precursor cells in the male tail, acting in concert with Wnt and semaphorin signaling pathways. Regulates transcription of genes encoding extracellular matrix (ECM) components which may contribute to the substratum required for migration of the neighboring ray 1 precursor cells. Involved in repressing infection by the microsporidian pathogen N.parisii, probably acting independently of its canonical partner, mxl-2. The protein is Protein WBSCR14 homolog (mml-1) of Caenorhabditis elegans.